The sequence spans 254 residues: Winged helix repair factor 1 (254 aa).

The short motif at 4–21 (KRRLLASEAFGVKRRRAP) is the Bipartite nuclear localization signal element. Winged helix domain regions lie at residues 32–104 (RAGS…GIVF), 120–179 (PCAG…LAVP), and 180–254 (GAGR…LPDT).

The protein belongs to the STK19 family. As to quaternary structure, monomer in solution. Homodimer; when bound to DNA. Component of a transcription-coupled nucleotide excision repair (TC-NER) complex composed of STK19, ERCC6, ERCC8, DDA1, DDB1, ELOF1 and UVSSA which assembles and interacts with the multiprotein RNA polymerase II complex when it stalls at DNA lesions.

Its subcellular location is the nucleus. In terms of biological role, DNA-binding protein which is required for efficient transcription-coupled nucleotide excision repair (TC-NER). Acts as part of a TC-NER complex which assembles and interacts with RNA polymerase II (RNAPII) when it stalls at DNA lesions. TC-NER complex subunit UVSSA binds to the GTF2H1/p62 subunit of the TFIIH transcription factor complex, tethering TFIIH to the TC-NER complex. WHR1/STK19 then interacts with the XPD helicase subunit of TFIIH which guides TFIIH to DNA downstream of the stalled RNAPII, ensuring DNA repair. Directly interacts with RNAPII and also binds to downstream DNA. Promotes the timely removal of DNA damage-stalled RNAPII, allowing downstream NER factors to access DNA lesions. Required for monoubiquitination of UVSSA. Regulates repositioning and stabilization of UVSSA within the TC-NER complex. Stimulates ubiquitination of RNAPII complex member RBP1. Also binds to RNA and regulates the expression levels of many mRNAs. This chain is Winged helix repair factor 1, found in Mus musculus (Mouse).